Consider the following 476-residue polypeptide: tRNA(Ile)-lysidine synthase (476 aa).

30–35 serves as a coordination point for ATP; that stretch reads SGGPDS.

The protein belongs to the tRNA(Ile)-lysidine synthase family.

The protein localises to the cytoplasm. It carries out the reaction cytidine(34) in tRNA(Ile2) + L-lysine + ATP = lysidine(34) in tRNA(Ile2) + AMP + diphosphate + H(+). Ligates lysine onto the cytidine present at position 34 of the AUA codon-specific tRNA(Ile) that contains the anticodon CAU, in an ATP-dependent manner. Cytidine is converted to lysidine, thus changing the amino acid specificity of the tRNA from methionine to isoleucine. The protein is tRNA(Ile)-lysidine synthase of Bacillus anthracis.